We begin with the raw amino-acid sequence, 471 residues long: Eremophilane O-acetyltransferase prx11 (471 aa).

The protein belongs to the fumigaclavine B O-acetyltransferase family. As to quaternary structure, monomer.

Its pathway is sesquiterpene biosynthesis. Functionally, O-acetyltransferase; part of the gene cluster that mediates the biosynthesis of PR-toxin, a bicyclic sesquiterpene belonging to the eremophilane class and acting as a mycotoxin. The first step of the pathway is catalyzed by the aristolochene synthase which performs the cyclization of trans,trans-farnesyl diphosphate (FPP) to the bicyclic sesquiterpene aristolochene. Following the formation of aristolochene, the non-oxygenated aristolochene is converted to the trioxygenated intermediate eremofortin B, via 7-epi-neopetasone. This conversion appears to involve three enzymes, a hydroxysterol oxidase-like enzyme, the quinone-oxidase prx3 that forms the quinone-type-structure in the bicyclic nucleus of aristolochene with the C8-oxo group and the C-3 hydroxyl group, and the P450 monooxygenase prx9 that introduces the epoxide at the double bond between carbons 1 and 2. No monoxy or dioxy-intermediates have been reported to be released to the broth, so these three early oxidative reactions may be coupled together. Eremofortin B is further oxidized by another P450 monooxygenase, that introduces a second epoxide between carbons 7 and 11 prior to acetylation to eremofortin A by the acetyltransferase prx11. The second epoxidation may be performed by a second P450 monooxygenase. After the acetylation step, eremofortin A is converted to eremofortin C and then to PR-toxin. First the conversion of eremofortin A to eremofortin C proceeds by oxidation of the side chain of the molecule at C-12 and is catalyzed by the short-chain oxidoreductase prx1. The cytochrome P450 monooxygenase prx8 also plays a role in this step. The primary alcohol formed at C-12 is finally oxidized by the short-chain alcohol dehydrogenase prx4 that forms PR-toxin. The polypeptide is Eremophilane O-acetyltransferase prx11 (Penicillium rubens (strain ATCC 28089 / DSM 1075 / NRRL 1951 / Wisconsin 54-1255) (Penicillium chrysogenum)).